The following is a 265-amino-acid chain: Shikimate dehydrogenase (NADP(+)) (265 aa).

Shikimate contacts are provided by residues 15–17 (SLS) and Thr-62. Catalysis depends on Lys-66, which acts as the Proton acceptor. 2 residues coordinate shikimate: Asn-87 and Asp-102. Residues 125–129 (GAGGA), 149–154 (NRTLEK), and Leu-209 each bind NADP(+). Position 211 (Tyr-211) interacts with shikimate. Gly-233 is a binding site for NADP(+).

Belongs to the shikimate dehydrogenase family. Homodimer.

The enzyme catalyses shikimate + NADP(+) = 3-dehydroshikimate + NADPH + H(+). It functions in the pathway metabolic intermediate biosynthesis; chorismate biosynthesis; chorismate from D-erythrose 4-phosphate and phosphoenolpyruvate: step 4/7. In terms of biological role, involved in the biosynthesis of the chorismate, which leads to the biosynthesis of aromatic amino acids. Catalyzes the reversible NADPH linked reduction of 3-dehydroshikimate (DHSA) to yield shikimate (SA). The sequence is that of Shikimate dehydrogenase (NADP(+)) from Legionella pneumophila subsp. pneumophila (strain Philadelphia 1 / ATCC 33152 / DSM 7513).